Consider the following 404-residue polypeptide: Subtilisin-like protease 3 (404 aa).

The signal sequence occupies residues 1 to 20 (MLFSKSLVALVACFLPLIVS). A propeptide spanning residues 21 to 114 (ATELKLRNAA…VDKDVKVSAY (94 aa)) is cleaved from the precursor. The region spanning 38-112 (SYIVVYKDID…AYVDKDVKVS (75 aa)) is the Inhibitor I9 domain. A Peptidase S8 domain is found at 123 to 404 (PWGLDRISHR…DNLAYNDDGY (282 aa)). N-linked (GlcNAc...) asparagine glycosylation occurs at N133. Catalysis depends on charge relay system residues D158 and H190. N-linked (GlcNAc...) asparagine glycosylation is found at N243, N251, N286, N307, and N340. S347 serves as the catalytic Charge relay system. Residue N366 is glycosylated (N-linked (GlcNAc...) asparagine).

It belongs to the peptidase S8 family.

It is found in the secreted. Its function is as follows. Secreted subtilisin-like serine endopeptidase. Mediates the degradation of collagen, the major structural protein in the mammalian host. Degrades the nonhelical regions of collagen that function in the cross-linking of the helical components. May function as virulence factor involved in epidermal wing necrosis observed in white nose syndrome (WNS) in bats. This is Subtilisin-like protease 3 from Pseudogymnoascus destructans (strain ATCC MYA-4855 / 20631-21) (Bat white-nose syndrome fungus).